We begin with the raw amino-acid sequence, 243 residues long: MILLGVNIDHIATLRQARGERYPDPVDAAFAAERAGADSITVHLREDRRHIQDRDVVLLQQTCQTKINLEMAASEPMLTLAERWKPQDCCLVPEKRHELTTEGGLDVVGNRHRLADAVARLHDAGIRVSLFVDPDLEQISAAGAIGATVVEMHTGRYANAATQAQRNLELEQLYRAAHQASLNGLTVHAGHGLTYHNVQPIARLPDLKELNIGHAIIARAVMVGMESAVKEMKRLMREAVKTP.

Asn-7 lines the 3-amino-2-oxopropyl phosphate pocket. Residue 9-10 coordinates 1-deoxy-D-xylulose 5-phosphate; that stretch reads DH. Arg-18 is a binding site for 3-amino-2-oxopropyl phosphate. Catalysis depends on His-43, which acts as the Proton acceptor. Residues Arg-45 and His-50 each contribute to the 1-deoxy-D-xylulose 5-phosphate site. The active-site Proton acceptor is Glu-70. Thr-100 contributes to the 1-deoxy-D-xylulose 5-phosphate binding site. Residue His-191 is the Proton donor of the active site. 3-amino-2-oxopropyl phosphate-binding positions include Gly-192 and 213–214; that span reads GH.

Belongs to the PNP synthase family. Homooctamer; tetramer of dimers.

Its subcellular location is the cytoplasm. It catalyses the reaction 3-amino-2-oxopropyl phosphate + 1-deoxy-D-xylulose 5-phosphate = pyridoxine 5'-phosphate + phosphate + 2 H2O + H(+). It participates in cofactor biosynthesis; pyridoxine 5'-phosphate biosynthesis; pyridoxine 5'-phosphate from D-erythrose 4-phosphate: step 5/5. Its function is as follows. Catalyzes the complicated ring closure reaction between the two acyclic compounds 1-deoxy-D-xylulose-5-phosphate (DXP) and 3-amino-2-oxopropyl phosphate (1-amino-acetone-3-phosphate or AAP) to form pyridoxine 5'-phosphate (PNP) and inorganic phosphate. The polypeptide is Pyridoxine 5'-phosphate synthase (Magnetococcus marinus (strain ATCC BAA-1437 / JCM 17883 / MC-1)).